Here is a 126-residue protein sequence, read N- to C-terminus: Fatty acid-binding protein 2, liver (126 aa).

Residues Thr54–Asn56, His99–Gln101, and Arg121 contribute to the cholate site.

It belongs to the calycin superfamily. Fatty-acid binding protein (FABP) family.

Its subcellular location is the cytoplasm. Binds free fatty acids and their coenzyme A derivatives, bilirubin, and some other small molecules in the cytoplasm. May be involved in intracellular lipid transport. The specificity of axolotl L-FABP differs from that of LB-FABP. Binds 2 ligands per protein molecule. This chain is Fatty acid-binding protein 2, liver, found in Ambystoma mexicanum (Axolotl).